A 381-amino-acid polypeptide reads, in one-letter code: (S)-scoulerine 9-O-methyltransferase (381 aa).

5 residues coordinate S-adenosyl-L-methionine: G223, E246, D266, M267, and K280. H284 acts as the Proton acceptor in catalysis.

This sequence belongs to the class I-like SAM-binding methyltransferase superfamily. Cation-independent O-methyltransferase family. COMT subfamily.

It catalyses the reaction (S)-scoulerine + S-adenosyl-L-methionine = (S)-tetrahydrocolumbamine + S-adenosyl-L-homocysteine + H(+). Functionally, produces a precursor of protoberberine alkaloids. The protein is (S)-scoulerine 9-O-methyltransferase (SMT) of Coptis japonica (Japanese goldthread).